A 255-amino-acid chain; its full sequence is Hydroxyacylglutathione hydrolase (255 aa).

Zn(2+) is bound by residues histidine 53, histidine 55, aspartate 57, histidine 58, histidine 110, aspartate 127, and histidine 165.

Belongs to the metallo-beta-lactamase superfamily. Glyoxalase II family. Monomer. Zn(2+) serves as cofactor.

The enzyme catalyses an S-(2-hydroxyacyl)glutathione + H2O = a 2-hydroxy carboxylate + glutathione + H(+). It functions in the pathway secondary metabolite metabolism; methylglyoxal degradation; (R)-lactate from methylglyoxal: step 2/2. Thiolesterase that catalyzes the hydrolysis of S-D-lactoyl-glutathione to form glutathione and D-lactic acid. The polypeptide is Hydroxyacylglutathione hydrolase (Xanthomonas oryzae pv. oryzae (strain MAFF 311018)).